Consider the following 142-residue polypeptide: FAD synthase (142 aa).

ATP-binding positions include 9–10 (TF), 14–17 (HPGH), aspartate 92, and tyrosine 119.

The protein belongs to the archaeal FAD synthase family. As to quaternary structure, homodimer. The cofactor is a divalent metal cation.

It catalyses the reaction FMN + ATP + H(+) = FAD + diphosphate. It functions in the pathway cofactor biosynthesis; FAD biosynthesis; FAD from FMN: step 1/1. Functionally, catalyzes the transfer of the AMP portion of ATP to flavin mononucleotide (FMN) to produce flavin adenine dinucleotide (FAD) coenzyme. The polypeptide is FAD synthase (Halorhabdus utahensis (strain DSM 12940 / JCM 11049 / AX-2)).